The chain runs to 559 residues: Membrane protein insertase YidC (559 aa).

Helical transmembrane passes span 5 to 25 (IVNLVAAIVLSLGIIFGWQYF), 332 to 352 (AIDFGWFYIITKPVFYAMNFF), 355 to 375 (YVGNFGISILIVTVIIKLLMF), 429 to 449 (LPILVQIPVFFSIYKVLYVTI), 474 to 494 (LFGLLHFSLPSFLMIGAWPIL), and 520 to 540 (FMPLVFLVMFSSFPAGLLIYW).

Belongs to the OXA1/ALB3/YidC family. Type 1 subfamily. As to quaternary structure, interacts with the Sec translocase complex via SecD. Specifically interacts with transmembrane segments of nascent integral membrane proteins during membrane integration.

The protein resides in the cell inner membrane. Functionally, required for the insertion and/or proper folding and/or complex formation of integral membrane proteins into the membrane. Involved in integration of membrane proteins that insert both dependently and independently of the Sec translocase complex, as well as at least some lipoproteins. Aids folding of multispanning membrane proteins. The polypeptide is Membrane protein insertase YidC (Rickettsia bellii (strain OSU 85-389)).